A 232-amino-acid chain; its full sequence is Ubiquinone biosynthesis O-methyltransferase (232 aa).

S-adenosyl-L-methionine is bound by residues Arg36, Gly55, Asp76, and Met120.

The protein belongs to the methyltransferase superfamily. UbiG/COQ3 family.

It catalyses the reaction a 3-demethylubiquinol + S-adenosyl-L-methionine = a ubiquinol + S-adenosyl-L-homocysteine + H(+). The catalysed reaction is a 3-(all-trans-polyprenyl)benzene-1,2-diol + S-adenosyl-L-methionine = a 2-methoxy-6-(all-trans-polyprenyl)phenol + S-adenosyl-L-homocysteine + H(+). It functions in the pathway cofactor biosynthesis; ubiquinone biosynthesis. In terms of biological role, O-methyltransferase that catalyzes the 2 O-methylation steps in the ubiquinone biosynthetic pathway. The chain is Ubiquinone biosynthesis O-methyltransferase from Paraburkholderia xenovorans (strain LB400).